The sequence spans 329 residues: DNA-directed RNA polymerase subunit alpha (329 aa).

The interval 1 to 231 (MSILSFQMPE…KHFMLFSDQT (231 aa)) is alpha N-terminal domain (alpha-NTD). The alpha C-terminal domain (alpha-CTD) stretch occupies residues 247 to 329 (EEFLHMRKLL…DTAKYKLDED (83 aa)).

The protein belongs to the RNA polymerase alpha chain family. As to quaternary structure, homodimer. The RNAP catalytic core consists of 2 alpha, 1 beta, 1 beta' and 1 omega subunit. When a sigma factor is associated with the core the holoenzyme is formed, which can initiate transcription.

It carries out the reaction RNA(n) + a ribonucleoside 5'-triphosphate = RNA(n+1) + diphosphate. Its function is as follows. DNA-dependent RNA polymerase catalyzes the transcription of DNA into RNA using the four ribonucleoside triphosphates as substrates. The polypeptide is DNA-directed RNA polymerase subunit alpha (Cytophaga hutchinsonii (strain ATCC 33406 / DSM 1761 / CIP 103989 / NBRC 15051 / NCIMB 9469 / D465)).